The chain runs to 177 residues: Probable prophage lysozyme (177 aa).

The active-site Proton donor is the E35. The active-site Nucleophile is the D44.

The protein belongs to the glycosyl hydrolase 24 family.

The enzyme catalyses Hydrolysis of (1-&gt;4)-beta-linkages between N-acetylmuramic acid and N-acetyl-D-glucosamine residues in a peptidoglycan and between N-acetyl-D-glucosamine residues in chitodextrins.. In terms of biological role, essential for lysis of bacterial cell wall, by showing cell wall hydrolyzing activity. The sequence is that of Probable prophage lysozyme (rrrQ) from Escherichia coli (strain K12).